The sequence spans 96 residues: Co-chaperonin GroES (96 aa).

The protein belongs to the GroES chaperonin family. Heptamer of 7 subunits arranged in a ring. Interacts with the chaperonin GroEL.

The protein localises to the cytoplasm. In terms of biological role, together with the chaperonin GroEL, plays an essential role in assisting protein folding. The GroEL-GroES system forms a nano-cage that allows encapsulation of the non-native substrate proteins and provides a physical environment optimized to promote and accelerate protein folding. GroES binds to the apical surface of the GroEL ring, thereby capping the opening of the GroEL channel. This is Co-chaperonin GroES from Shewanella amazonensis (strain ATCC BAA-1098 / SB2B).